Consider the following 862-residue polypeptide: Taxadiene synthase (862 aa).

The tract at residues 45 to 66 is disordered; sequence RVKMSRGSGGPGPVVMMSSSTG. Mg(2+)-binding residues include Asp-613, Asp-617, Asn-757, Thr-761, and Glu-765. The short motif at 613 to 617 is the DDXXD motif element; that stretch reads DDMAD.

It belongs to the terpene synthase family. The cofactor is Mg(2+).

The catalysed reaction is (2E,6E,10E)-geranylgeranyl diphosphate = taxa-4(5),11(12)-diene + diphosphate. It participates in alkaloid biosynthesis; taxol biosynthesis; taxa-4(20),11-dien-5alpha-ol from geranylgeranyl diphosphate: step 1/2. In terms of biological role, catalyzes the cyclization of the ubiquitous isoprenoid intermediate geranylgeranyl diphosphate to taxa-4,11-diene, the parent olefin with a taxane skeleton. This Taxus chinensis (Chinese yew) protein is Taxadiene synthase (TDC1).